We begin with the raw amino-acid sequence, 359 residues long: Uroporphyrinogen decarboxylase (359 aa).

Substrate contacts are provided by residues 36–40 (RQAGR), Asp85, Tyr160, Ser215, and His338.

Belongs to the uroporphyrinogen decarboxylase family. As to quaternary structure, homodimer.

It localises to the cytoplasm. It catalyses the reaction uroporphyrinogen III + 4 H(+) = coproporphyrinogen III + 4 CO2. Its pathway is porphyrin-containing compound metabolism; protoporphyrin-IX biosynthesis; coproporphyrinogen-III from 5-aminolevulinate: step 4/4. Functionally, catalyzes the decarboxylation of four acetate groups of uroporphyrinogen-III to yield coproporphyrinogen-III. The sequence is that of Uroporphyrinogen decarboxylase from Corynebacterium efficiens (strain DSM 44549 / YS-314 / AJ 12310 / JCM 11189 / NBRC 100395).